A 318-amino-acid chain; its full sequence is uncharacterized protein (318 aa).

The protein belongs to the glycosyltransferase 2 family.

This is an uncharacterized protein from Rickettsia typhi (strain ATCC VR-144 / Wilmington).